The chain runs to 79 residues: Large ribosomal subunit protein uL22 (79 aa).

The protein belongs to the universal ribosomal protein uL22 family. In terms of assembly, part of the 50S ribosomal subunit.

This protein binds specifically to 23S rRNA; its binding is stimulated by other ribosomal proteins, e.g. L4, L17, and L20. It is important during the early stages of 50S assembly. It makes multiple contacts with different domains of the 23S rRNA in the assembled 50S subunit and ribosome. In terms of biological role, the globular domain of the protein is located near the polypeptide exit tunnel on the outside of the subunit, while an extended beta-hairpin is found that lines the wall of the exit tunnel in the center of the 70S ribosome. The sequence is that of Large ribosomal subunit protein uL22 (rplV) from Clover proliferation phytoplasma.